The chain runs to 63 residues: Large ribosomal subunit protein uL30 (63 aa).

Belongs to the universal ribosomal protein uL30 family. Part of the 50S ribosomal subunit.

The protein is Large ribosomal subunit protein uL30 of Coxiella burnetii (strain CbuK_Q154) (Coxiella burnetii (strain Q154)).